Consider the following 314-residue polypeptide: 4-hydroxy-3-methylbut-2-enyl diphosphate reductase (314 aa).

Residue cysteine 12 coordinates [4Fe-4S] cluster. (2E)-4-hydroxy-3-methylbut-2-enyl diphosphate is bound by residues histidine 43 and histidine 81. Histidine 43 and histidine 81 together coordinate dimethylallyl diphosphate. Positions 43 and 81 each coordinate isopentenyl diphosphate. Residue cysteine 103 participates in [4Fe-4S] cluster binding. Residue histidine 131 coordinates (2E)-4-hydroxy-3-methylbut-2-enyl diphosphate. Histidine 131 lines the dimethylallyl diphosphate pocket. Histidine 131 provides a ligand contact to isopentenyl diphosphate. Residue glutamate 133 is the Proton donor of the active site. Threonine 170 serves as a coordination point for (2E)-4-hydroxy-3-methylbut-2-enyl diphosphate. Position 198 (cysteine 198) interacts with [4Fe-4S] cluster. Residues serine 226, asparagine 228, and serine 271 each coordinate (2E)-4-hydroxy-3-methylbut-2-enyl diphosphate. Positions 226, 228, and 271 each coordinate dimethylallyl diphosphate. Isopentenyl diphosphate contacts are provided by serine 226, asparagine 228, and serine 271.

The protein belongs to the IspH family. The cofactor is [4Fe-4S] cluster.

The enzyme catalyses isopentenyl diphosphate + 2 oxidized [2Fe-2S]-[ferredoxin] + H2O = (2E)-4-hydroxy-3-methylbut-2-enyl diphosphate + 2 reduced [2Fe-2S]-[ferredoxin] + 2 H(+). It catalyses the reaction dimethylallyl diphosphate + 2 oxidized [2Fe-2S]-[ferredoxin] + H2O = (2E)-4-hydroxy-3-methylbut-2-enyl diphosphate + 2 reduced [2Fe-2S]-[ferredoxin] + 2 H(+). It participates in isoprenoid biosynthesis; dimethylallyl diphosphate biosynthesis; dimethylallyl diphosphate from (2E)-4-hydroxy-3-methylbutenyl diphosphate: step 1/1. Its pathway is isoprenoid biosynthesis; isopentenyl diphosphate biosynthesis via DXP pathway; isopentenyl diphosphate from 1-deoxy-D-xylulose 5-phosphate: step 6/6. Functionally, catalyzes the conversion of 1-hydroxy-2-methyl-2-(E)-butenyl 4-diphosphate (HMBPP) into a mixture of isopentenyl diphosphate (IPP) and dimethylallyl diphosphate (DMAPP). Acts in the terminal step of the DOXP/MEP pathway for isoprenoid precursor biosynthesis. The sequence is that of 4-hydroxy-3-methylbut-2-enyl diphosphate reductase from Bacillus velezensis (strain DSM 23117 / BGSC 10A6 / LMG 26770 / FZB42) (Bacillus amyloliquefaciens subsp. plantarum).